The sequence spans 565 residues: Oxygen-dependent choline dehydrogenase (565 aa).

FAD is bound at residue 7–36 (DYIICGAGSAGNVLATRLTEDPDVTVLLLE). His474 (proton acceptor) is an active-site residue.

It belongs to the GMC oxidoreductase family. It depends on FAD as a cofactor.

The enzyme catalyses choline + A = betaine aldehyde + AH2. It carries out the reaction betaine aldehyde + NAD(+) + H2O = glycine betaine + NADH + 2 H(+). It functions in the pathway amine and polyamine biosynthesis; betaine biosynthesis via choline pathway; betaine aldehyde from choline (cytochrome c reductase route): step 1/1. Functionally, involved in the biosynthesis of the osmoprotectant glycine betaine. Catalyzes the oxidation of choline to betaine aldehyde and betaine aldehyde to glycine betaine at the same rate. The chain is Oxygen-dependent choline dehydrogenase from Burkholderia thailandensis (strain ATCC 700388 / DSM 13276 / CCUG 48851 / CIP 106301 / E264).